The chain runs to 611 residues: Chaperone protein DnaK (611 aa).

T173 is modified (phosphothreonine; by autocatalysis). Residues 577 to 592 show a composition bias toward low complexity; the sequence is QAAAGQAEGAEGAQDA. The tract at residues 577 to 598 is disordered; that stretch reads QAAAGQAEGAEGAQDAGAKKDN.

It belongs to the heat shock protein 70 family.

Acts as a chaperone. This Bacillus anthracis (strain A0248) protein is Chaperone protein DnaK.